A 201-amino-acid polypeptide reads, in one-letter code: Large ribosomal subunit protein uL4 (201 aa).

Residues 44 to 66 (KAQKTRAEVRGGGKKPWRQKGTG) are disordered. Residues 55–66 (GGKKPWRQKGTG) are compositionally biased toward basic residues.

The protein belongs to the universal ribosomal protein uL4 family. Part of the 50S ribosomal subunit.

Functionally, one of the primary rRNA binding proteins, this protein initially binds near the 5'-end of the 23S rRNA. It is important during the early stages of 50S assembly. It makes multiple contacts with different domains of the 23S rRNA in the assembled 50S subunit and ribosome. Forms part of the polypeptide exit tunnel. This Alteromonas mediterranea (strain DSM 17117 / CIP 110805 / LMG 28347 / Deep ecotype) protein is Large ribosomal subunit protein uL4.